The following is a 147-amino-acid chain: Effector TSP1 (147 aa).

A signal peptide spans 1 to 19; the sequence is MQITKTLVATLFAASTAFA. 2 disulfides stabilise this stretch: cysteine 44–cysteine 51 and cysteine 67–cysteine 87.

Homodimer.

It localises to the secreted. Functionally, stimulates salicylic acid signaling in host plant roots. The protein is Effector TSP1 of Hypocrea virens (strain Gv29-8 / FGSC 10586) (Gliocladium virens).